The following is a 119-amino-acid chain: Large ribosomal subunit protein bL12 (119 aa).

It belongs to the bacterial ribosomal protein bL12 family. As to quaternary structure, homodimer. Part of the ribosomal stalk of the 50S ribosomal subunit. Forms a multimeric L10(L12)X complex, where L10 forms an elongated spine to which 2 to 4 L12 dimers bind in a sequential fashion. Binds GTP-bound translation factors.

In terms of biological role, forms part of the ribosomal stalk which helps the ribosome interact with GTP-bound translation factors. Is thus essential for accurate translation. This chain is Large ribosomal subunit protein bL12, found in Bacillus anthracis (strain A0248).